The following is a 271-amino-acid chain: MATADEQEEEMRMRLPLPLGGRVAIVTGASRGIGREIALNMAEKGAKVVIHYSSNQHAAEEVASIINNKSPSSGDGVRAIVCKADVAEPSQVAQLFDTAEHAFGPLHIVVNNAGVTDSKYPTLAQTSDEEWDRIFQVNCKGAFLCSREAAKRVVRGGGGRIINISSSLVAMPIPRYGAYTASKAAVEMMTRILAQELRGTQITANCVAPGPVATDMFFAGKSEAAVEAGVKSNPFERLGKVEDVAPLVAFLASDEGEWVNAQVVRVNGGQV.

Residue 25-49 (IVTGASRGIGREIALNMAEKGAKVV) coordinates NAD(+). Serine 166 contributes to the substrate binding site. Tyrosine 179 serves as the catalytic Proton acceptor.

It belongs to the short-chain dehydrogenases/reductases (SDR) family.

This chain is Short-chain type dehydrogenase/reductase, found in Picea abies (Norway spruce).